The following is a 115-amino-acid chain: Nitrogen regulatory protein P-II 1 (115 aa).

Tyrosine 54 carries the O-UMP-tyrosine modification.

This sequence belongs to the P(II) protein family.

Its function is as follows. Could be involved in the regulation of nitrogen fixation. The chain is Nitrogen regulatory protein P-II 1 from Methanothermobacter thermautotrophicus (strain ATCC 29096 / DSM 1053 / JCM 10044 / NBRC 100330 / Delta H) (Methanobacterium thermoautotrophicum).